The chain runs to 184 residues: ATP synthase subunit b, chloroplastic (184 aa).

Residues 27-49 traverse the membrane as a helical segment; it reads LATNPINLSVVLGVLIFFGKGVL.

The protein belongs to the ATPase B chain family. As to quaternary structure, F-type ATPases have 2 components, F(1) - the catalytic core - and F(0) - the membrane proton channel. F(1) has five subunits: alpha(3), beta(3), gamma(1), delta(1), epsilon(1). F(0) has four main subunits: a(1), b(1), b'(1) and c(10-14). The alpha and beta chains form an alternating ring which encloses part of the gamma chain. F(1) is attached to F(0) by a central stalk formed by the gamma and epsilon chains, while a peripheral stalk is formed by the delta, b and b' chains.

It localises to the plastid. The protein localises to the chloroplast thylakoid membrane. In terms of biological role, f(1)F(0) ATP synthase produces ATP from ADP in the presence of a proton or sodium gradient. F-type ATPases consist of two structural domains, F(1) containing the extramembraneous catalytic core and F(0) containing the membrane proton channel, linked together by a central stalk and a peripheral stalk. During catalysis, ATP synthesis in the catalytic domain of F(1) is coupled via a rotary mechanism of the central stalk subunits to proton translocation. Its function is as follows. Component of the F(0) channel, it forms part of the peripheral stalk, linking F(1) to F(0). This is ATP synthase subunit b, chloroplastic from Solanum bulbocastanum (Wild potato).